The following is a 385-amino-acid chain: S-adenosylmethionine synthase (385 aa).

His15 provides a ligand contact to ATP. Position 17 (Asp17) interacts with Mg(2+). Glu43 is a K(+) binding site. L-methionine is bound by residues Glu56 and Gln99. Residues 99 to 109 (QSPDINQGVDR) form a flexible loop region. ATP contacts are provided by residues 164–166 (DAK), 230–231 (RF), Asp239, 245–246 (RK), Ala262, and Lys266. Position 239 (Asp239) interacts with L-methionine. Lys270 contributes to the L-methionine binding site.

This sequence belongs to the AdoMet synthase family. Homotetramer; dimer of dimers. Mg(2+) is required as a cofactor. It depends on K(+) as a cofactor.

It localises to the cytoplasm. It carries out the reaction L-methionine + ATP + H2O = S-adenosyl-L-methionine + phosphate + diphosphate. The protein operates within amino-acid biosynthesis; S-adenosyl-L-methionine biosynthesis; S-adenosyl-L-methionine from L-methionine: step 1/1. Catalyzes the formation of S-adenosylmethionine (AdoMet) from methionine and ATP. The overall synthetic reaction is composed of two sequential steps, AdoMet formation and the subsequent tripolyphosphate hydrolysis which occurs prior to release of AdoMet from the enzyme. This Sodalis glossinidius (strain morsitans) protein is S-adenosylmethionine synthase.